The primary structure comprises 214 residues: Riboflavin kinase (214 aa).

Positions 1 to 27 are disordered; that stretch reads MRPDRPRDPVTGPDEGPESPYPIRMSG. Thr-44 and Asn-46 together coordinate Mg(2+). The Nucleophile role is filled by Glu-101.

It belongs to the flavokinase family. Zn(2+) serves as cofactor. Mg(2+) is required as a cofactor.

It carries out the reaction riboflavin + ATP = FMN + ADP + H(+). It participates in cofactor biosynthesis; FMN biosynthesis; FMN from riboflavin (ATP route): step 1/1. Functionally, catalyzes the phosphorylation of riboflavin (vitamin B2) to form flavin mononucleotide (FMN) coenzyme. This Aspergillus niger (strain ATCC MYA-4892 / CBS 513.88 / FGSC A1513) protein is Riboflavin kinase (fmn1).